Reading from the N-terminus, the 256-residue chain is DNA repair protein RecO (256 aa).

This sequence belongs to the RecO family.

In terms of biological role, involved in DNA repair and RecF pathway recombination. The polypeptide is DNA repair protein RecO (Streptococcus equi subsp. zooepidemicus (strain MGCS10565)).